Consider the following 591-residue polypeptide: Oxaloacetate decarboxylase alpha chain (591 aa).

The Pyruvate carboxyltransferase domain maps to 3–263 (IAITDVVLRD…DTGLDILKLE (261 aa)). A Biotinyl-binding domain is found at 518–591 (PAGAGTPVTA…SVGDTLMTLA (74 aa)). At Lys-557 the chain carries N6-biotinyllysine.

As to quaternary structure, composed of three chains (alpha, beta, and gamma). Biotin is required as a cofactor.

The enzyme catalyses oxaloacetate + 2 Na(+)(in) + H(+) = pyruvate + 2 Na(+)(out) + CO2. Functionally, catalyzes the decarboxylation of oxaloacetate coupled to Na(+) translocation. This is Oxaloacetate decarboxylase alpha chain (oadA1) from Salmonella typhimurium (strain LT2 / SGSC1412 / ATCC 700720).